We begin with the raw amino-acid sequence, 642 residues long: Pentatricopeptide repeat-containing protein At3g16010 (642 aa).

PPR repeat units lie at residues 125–159 (DCST…TYVS), 161–195 (SPAV…KCKP), 196–230 (TSST…GDCF), 232–266 (DTIT…CMQP), 267–301 (TEKI…GCSP), 302–336 (TVYT…GLTP), 337–371 (DVVF…RCTP), 372–407 (TVVS…SVSP), 408–442 (SEFT…GFPP), 443–473 (CPAA…LKEN), 478–512 (SSRV…GSGP), 513–547 (DVYA…GCRA), 548–582 (DINS…GIKP), and 583–617 (DGVT…GFEY).

Belongs to the PPR family. P subfamily.

This Arabidopsis thaliana (Mouse-ear cress) protein is Pentatricopeptide repeat-containing protein At3g16010.